The chain runs to 250 residues: Protein orai-2 (250 aa).

4 consecutive transmembrane segments (helical) span residues 66-83 (TSALLSGFAMVAMVEVQL), 94-114 (LIAFSACTTVLVAVHLFALLI), 148-168 (LAWGFSTVLGILLFLAEVVLL), and 192-212 (AALVSTIIMVPVGLIFVVFTI).

Belongs to the Orai family. As to quaternary structure, oligomerizes in homomeric and heteromeric ORAI complexes. Native CRAC channels most likely consist of hexameric ORAI heteromers, implying that diverse ORAI1, ORAI2 and ORAI3 subunit combinations with distinct biophysical properties can operate in a cell-type specific way. Interacts with STIM1; this regulates channel activity. Interacts with CRACR2A/EFCAB4B.

It localises to the cell membrane. The catalysed reaction is Ca(2+)(in) = Ca(2+)(out). With respect to regulation, CRAC channels are regulated by fast Ca(2+)-dependent inactivation (FCDI), a mechanism that limits Ca(2+) influx and cell toxicity. ORAI2 channels display prominent FCDI. Inhibited by lanthanides such as Gd(3+) ions. In terms of biological role, pore-forming subunit of inward rectifying Ca(2+) release-activated Ca(2+) (CRAC) channels. Assembles with ORAI1 and ORAI3 to form hexameric CRAC channels that mediate Ca(2+) influx upon depletion of endoplasmic reticulum Ca(2+) store and channel activation by Ca(2+) sensor STIM1, a process known as store-operated Ca(2+) entry (SOCE). Various pore subunit combinations may account for distinct CRAC channel spatiotemporal and cell-type specific dynamics. ORAI1 mainly contributes to the generation of Ca(2+) plateaus involved in sustained Ca(2+) entry and is dispensable for cytosolic Ca(2+) oscillations, whereas ORAI2 and ORAI3 generate oscillatory patterns. CRAC channels assemble in Ca(2+) signaling microdomains where Ca(2+) influx is coupled to calmodulin and calcineurin signaling and activation of NFAT transcription factors recruited to ORAI1 via AKAP5. CRAC channels are the main pathway for Ca(2+) influx in T cells and promote the immune response to pathogens by activating NFAT-dependent cytokine and chemokine transcription. The sequence is that of Protein orai-2 (Orai2) from Mus musculus (Mouse).